We begin with the raw amino-acid sequence, 234 residues long: Orotidine 5'-phosphate decarboxylase (234 aa).

Residues Asp-11, Lys-33, 60 to 69, Thr-120, Arg-181, Gln-190, Gly-210, and Arg-211 each bind substrate; that span reads DLKFHDIPNT. Lys-62 serves as the catalytic Proton donor.

This sequence belongs to the OMP decarboxylase family. Type 1 subfamily. As to quaternary structure, homodimer.

It catalyses the reaction orotidine 5'-phosphate + H(+) = UMP + CO2. It participates in pyrimidine metabolism; UMP biosynthesis via de novo pathway; UMP from orotate: step 2/2. Catalyzes the decarboxylation of orotidine 5'-monophosphate (OMP) to uridine 5'-monophosphate (UMP). In Aliivibrio salmonicida (strain LFI1238) (Vibrio salmonicida (strain LFI1238)), this protein is Orotidine 5'-phosphate decarboxylase.